A 1129-amino-acid chain; its full sequence is Protein TPR1 (1129 aa).

The 33-residue stretch at 4 to 36 (LSRELVFLILQFLDEEKFKETVHKLEQESGFFF) folds into the LisH domain. The CTLH domain maps to 34 to 92 (FFFNMKYFEEKVHAGEWDEVEKYLSGFTKVDDNRYSMKIFFEIRKQKYLEALDRHDRAK). WD repeat units lie at residues 337–377 (SQGS…RLFS), 398–437 (ESSI…ETRQ), 443–485 (AHSG…FSFE), 487–527 (HEAP…SRVD), 579–618 (KKSA…MLSS), 623–662 (GGLP…RTLR), 762–801 (DQAS…QNPS), 829–867 (NPED…VMTT), 870–910 (PPPP…VKTR), 913–952 (GHQR…KKKS), and 1005–1044 (ALSA…LRCR). Positions 1092 to 1129 (LESEGKWGTTPPTENGVPNGRTSTSSATSNPAADQIQR) are disordered. Low complexity predominate over residues 1113-1129 (TSTSSATSNPAADQIQR).

In terms of assembly, tetramer. Interacts with D53. Interacts with WOX1. Interacts with MOF1. Expressed in panicles, stems, leaves, spikelets and seed endosperm.

Functionally, probable downstream regulator of strigolactones signaling. The sequence is that of Protein TPR1 from Oryza sativa subsp. japonica (Rice).